The sequence spans 226 residues: dITP/XTP pyrophosphatase (226 aa).

Residue 14–19 coordinates substrate; sequence TGNKDK. Positions 49 and 83 each coordinate Mg(2+). Aspartate 83 serves as the catalytic Proton acceptor. Substrate contacts are provided by residues threonine 84, 176 to 179, lysine 199, and 204 to 205; these read FGYD and HR.

It belongs to the HAM1 NTPase family. Homodimer. Mg(2+) is required as a cofactor.

The enzyme catalyses XTP + H2O = XMP + diphosphate + H(+). It carries out the reaction dITP + H2O = dIMP + diphosphate + H(+). The catalysed reaction is ITP + H2O = IMP + diphosphate + H(+). Functionally, pyrophosphatase that catalyzes the hydrolysis of nucleoside triphosphates to their monophosphate derivatives, with a high preference for the non-canonical purine nucleotides XTP (xanthosine triphosphate), dITP (deoxyinosine triphosphate) and ITP. Seems to function as a house-cleaning enzyme that removes non-canonical purine nucleotides from the nucleotide pool, thus preventing their incorporation into DNA/RNA and avoiding chromosomal lesions. The sequence is that of dITP/XTP pyrophosphatase from Chlorobaculum tepidum (strain ATCC 49652 / DSM 12025 / NBRC 103806 / TLS) (Chlorobium tepidum).